The chain runs to 530 residues: Arginine--tRNA ligase (530 aa).

Positions 113 to 123 (ANPTGPLHIGH) match the 'HIGH' region motif.

This sequence belongs to the class-I aminoacyl-tRNA synthetase family. Monomer.

The protein localises to the cytoplasm. It carries out the reaction tRNA(Arg) + L-arginine + ATP = L-arginyl-tRNA(Arg) + AMP + diphosphate. This is Arginine--tRNA ligase from Campylobacter jejuni subsp. jejuni serotype O:6 (strain 81116 / NCTC 11828).